The sequence spans 361 residues: tRNA/tmRNA (uracil-C(5))-methyltransferase (361 aa).

S-adenosyl-L-methionine contacts are provided by Gln-185, Tyr-213, Asn-218, Glu-234, and Asp-294. Cys-319 serves as the catalytic Nucleophile. Glu-353 acts as the Proton acceptor in catalysis.

The protein belongs to the class I-like SAM-binding methyltransferase superfamily. RNA M5U methyltransferase family. TrmA subfamily.

It catalyses the reaction uridine(54) in tRNA + S-adenosyl-L-methionine = 5-methyluridine(54) in tRNA + S-adenosyl-L-homocysteine + H(+). The enzyme catalyses uridine(341) in tmRNA + S-adenosyl-L-methionine = 5-methyluridine(341) in tmRNA + S-adenosyl-L-homocysteine + H(+). Its function is as follows. Dual-specificity methyltransferase that catalyzes the formation of 5-methyluridine at position 54 (m5U54) in all tRNAs, and that of position 341 (m5U341) in tmRNA (transfer-mRNA). In Pseudomonas savastanoi pv. phaseolicola (strain 1448A / Race 6) (Pseudomonas syringae pv. phaseolicola (strain 1448A / Race 6)), this protein is tRNA/tmRNA (uracil-C(5))-methyltransferase.